The chain runs to 244 residues: 3-deoxy-manno-octulosonate cytidylyltransferase (244 aa).

This sequence belongs to the KdsB family.

It is found in the cytoplasm. The catalysed reaction is 3-deoxy-alpha-D-manno-oct-2-ulosonate + CTP = CMP-3-deoxy-beta-D-manno-octulosonate + diphosphate. Its pathway is nucleotide-sugar biosynthesis; CMP-3-deoxy-D-manno-octulosonate biosynthesis; CMP-3-deoxy-D-manno-octulosonate from 3-deoxy-D-manno-octulosonate and CTP: step 1/1. The protein operates within bacterial outer membrane biogenesis; lipopolysaccharide biosynthesis. Activates KDO (a required 8-carbon sugar) for incorporation into bacterial lipopolysaccharide in Gram-negative bacteria. The protein is 3-deoxy-manno-octulosonate cytidylyltransferase of Ruthia magnifica subsp. Calyptogena magnifica.